Reading from the N-terminus, the 421-residue chain is Testin (421 aa).

Residues 92–199 enclose the PET domain; it reads MILTNPVAAK…GDVKLPREMD (108 aa). The interval 133–164 is disordered; the sequence is EKQPVAGSEGAQYRKKQLAKQLPAHDQDPSKC. The span at 155 to 164 shows a compositional bias: basic and acidic residues; that stretch reads PAHDQDPSKC. 3 consecutive LIM zinc-binding domains span residues 234 to 297, 299 to 359, and 362 to 421; these read YSCY…CDSE, PRCA…NHAV, and QGCH…KMMS.

It belongs to the prickle / espinas / testin family. As to quaternary structure, interacts via LIM domain 1 with ZYX. Interacts (via LIM domain 3) with ENAH and VASP. Interacts with ALKBH4, talin, actin, alpha-actinin, GRIP1 and PXN. Interacts (via LIM domain 2) with ACTL7A (via N-terminus). Heterodimer with ACTL7A; the heterodimer interacts with ENAH to form a heterotrimer.

Its subcellular location is the cytoplasm. The protein localises to the cell junction. It is found in the focal adhesion. Scaffold protein that may play a role in cell adhesion, cell spreading and in the reorganization of the actin cytoskeleton. Plays a role in the regulation of cell proliferation. May act as a tumor suppressor. This chain is Testin (TES), found in Equus caballus (Horse).